Reading from the N-terminus, the 259-residue chain is Phosphate import ATP-binding protein PstB 1 (259 aa).

The ABC transporter domain maps to 7–254; that stretch reads VKPEDVYQIN…PDDHRTKDYI (248 aa). 45 to 52 lines the ATP pocket; it reads GPSGCGKS.

This sequence belongs to the ABC transporter superfamily. Phosphate importer (TC 3.A.1.7) family. The complex is composed of two ATP-binding proteins (PstB), two transmembrane proteins (PstC and PstA) and a solute-binding protein (PstS).

It is found in the cell membrane. The enzyme catalyses phosphate(out) + ATP + H2O = ADP + 2 phosphate(in) + H(+). Part of the ABC transporter complex PstSACB involved in phosphate import. Responsible for energy coupling to the transport system. This is Phosphate import ATP-binding protein PstB 1 from Bacillus licheniformis (strain ATCC 14580 / DSM 13 / JCM 2505 / CCUG 7422 / NBRC 12200 / NCIMB 9375 / NCTC 10341 / NRRL NRS-1264 / Gibson 46).